We begin with the raw amino-acid sequence, 185 residues long: Orotate phosphoribosyltransferase (185 aa).

5-phospho-alpha-D-ribose 1-diphosphate contacts are provided by residues R98, K99, K102, H104, and 128–136 (EDVTTTGGS). 2 residues coordinate orotate: T132 and R160.

It belongs to the purine/pyrimidine phosphoribosyltransferase family. PyrE subfamily. Homodimer. Requires Mg(2+) as cofactor.

The catalysed reaction is orotidine 5'-phosphate + diphosphate = orotate + 5-phospho-alpha-D-ribose 1-diphosphate. The protein operates within pyrimidine metabolism; UMP biosynthesis via de novo pathway; UMP from orotate: step 1/2. In terms of biological role, catalyzes the transfer of a ribosyl phosphate group from 5-phosphoribose 1-diphosphate to orotate, leading to the formation of orotidine monophosphate (OMP). This chain is Orotate phosphoribosyltransferase, found in Bradyrhizobium sp. (strain BTAi1 / ATCC BAA-1182).